Consider the following 234-residue polypeptide: MIELWPAIDLIGSTSVRLTEGKYDSEEKMSRSAEESIAYYSQFECVNRIHIVDLIGAKAQHAREFDYIKSLRRLTTKDIEVGGGIRTKSQIMDYFAAGINYCIVGTKGIQDTEWLKEMAHTFPGRIYLSVDAYGEDIKVNGWEEDTELNLFSFVKQLSDIPIGGIIYTDIAKDGKMSGPNFELTGQLVKATTIPVIASGGIRHQQDIQRLASLNVHAAIIGKAAHQASFWEGLK.

The Proton acceptor role is filled by Asp9. Residue Asp131 is the Proton donor of the active site.

This sequence belongs to the HisA/HisF family.

It is found in the cytoplasm. The catalysed reaction is 1-(5-phospho-beta-D-ribosyl)-5-[(5-phospho-beta-D-ribosylamino)methylideneamino]imidazole-4-carboxamide = 5-[(5-phospho-1-deoxy-D-ribulos-1-ylimino)methylamino]-1-(5-phospho-beta-D-ribosyl)imidazole-4-carboxamide. Its pathway is amino-acid biosynthesis; L-histidine biosynthesis; L-histidine from 5-phospho-alpha-D-ribose 1-diphosphate: step 4/9. This is 1-(5-phosphoribosyl)-5-[(5-phosphoribosylamino)methylideneamino] imidazole-4-carboxamide isomerase from Staphylococcus aureus (strain MRSA252).